A 269-amino-acid polypeptide reads, in one-letter code: Cytochrome c oxidase subunit 3 (269 aa).

A run of 7 helical transmembrane segments spans residues 21 to 41 (PWPI…ALTM), 45 to 65 (IGHM…ATLW), 90 to 110 (GFLL…WAYF), 138 to 160 (PLLN…HGLV), 167 to 187 (ALSG…CQYI), 205 to 225 (FYAG…MLGI), and 247 to 267 (VLYC…FYWW).

The protein belongs to the cytochrome c oxidase subunit 3 family. As to quaternary structure, component of the cytochrome c oxidase (complex IV, CIV), a multisubunit enzyme composed of a catalytic core of 3 subunits and several supernumerary subunits. The complex exists as a monomer or a dimer and forms supercomplexes (SCs) in the inner mitochondrial membrane with ubiquinol-cytochrome c oxidoreductase (cytochrome b-c1 complex, complex III, CIII).

Its subcellular location is the mitochondrion inner membrane. It carries out the reaction 4 Fe(II)-[cytochrome c] + O2 + 8 H(+)(in) = 4 Fe(III)-[cytochrome c] + 2 H2O + 4 H(+)(out). In terms of biological role, component of the cytochrome c oxidase, the last enzyme in the mitochondrial electron transport chain which drives oxidative phosphorylation. The respiratory chain contains 3 multisubunit complexes succinate dehydrogenase (complex II, CII), ubiquinol-cytochrome c oxidoreductase (cytochrome b-c1 complex, complex III, CIII) and cytochrome c oxidase (complex IV, CIV), that cooperate to transfer electrons derived from NADH and succinate to molecular oxygen, creating an electrochemical gradient over the inner membrane that drives transmembrane transport and the ATP synthase. Cytochrome c oxidase is the component of the respiratory chain that catalyzes the reduction of oxygen to water. Electrons originating from reduced cytochrome c in the intermembrane space (IMS) are transferred via the dinuclear copper A center (CU(A)) of subunit 2 and heme A of subunit 1 to the active site in subunit 1, a binuclear center (BNC) formed by heme A3 and copper B (CU(B)). The BNC reduces molecular oxygen to 2 water molecules using 4 electrons from cytochrome c in the IMS and 4 protons from the mitochondrial matrix. This chain is Cytochrome c oxidase subunit 3 (COX3), found in Kluyveromyces lactis (strain ATCC 8585 / CBS 2359 / DSM 70799 / NBRC 1267 / NRRL Y-1140 / WM37) (Yeast).